The following is a 123-amino-acid chain: Protein Wnt-3b (123 aa).

Serine 1 is lipidated: O-palmitoleoyl serine; by PORCN. Cysteine 89 and cysteine 104 form a disulfide bridge. Asparagine 90 carries N-linked (GlcNAc...) asparagine glycosylation.

It belongs to the Wnt family. Palmitoleoylation is required for efficient binding to frizzled receptors. Depalmitoleoylation leads to Wnt signaling pathway inhibition.

The protein localises to the secreted. It localises to the extracellular space. Its subcellular location is the extracellular matrix. Its function is as follows. Ligand for members of the frizzled family of seven transmembrane receptors. Probable developmental protein. May be a signaling molecule which affects the development of discrete regions of tissues. Is likely to signal over only few cell diameters. The sequence is that of Protein Wnt-3b (WNT-3B) from Alopias vulpinus (Common thresher shark).